The chain runs to 282 residues: ATP synthase gamma chain (282 aa).

Belongs to the ATPase gamma chain family. In terms of assembly, F-type ATPases have 2 components, CF(1) - the catalytic core - and CF(0) - the membrane proton channel. CF(1) has five subunits: alpha(3), beta(3), gamma(1), delta(1), epsilon(1). CF(0) has three main subunits: a, b and c.

Its subcellular location is the cell membrane. Functionally, produces ATP from ADP in the presence of a proton gradient across the membrane. The gamma chain is believed to be important in regulating ATPase activity and the flow of protons through the CF(0) complex. The sequence is that of ATP synthase gamma chain from Clostridium botulinum (strain Loch Maree / Type A3).